A 570-amino-acid polypeptide reads, in one-letter code: Endo-1,4-beta-xylanase 4 (570 aa).

Positions 1 to 24 are cleaved as a signal peptide; sequence MKRFNYGFFHLVLFLISLLLLGSG. N-linked (GlcNAc...) asparagine glycans are attached at residues Asn-92, Asn-190, and Asn-300. The region spanning 195–494 is the GH10 domain; that stretch reads EGSVISIEQI…TQAGDLIDKL (300 aa). Glu-325 acts as the Proton donor in catalysis. Asn-339 carries N-linked (GlcNAc...) asparagine glycosylation. The active-site Nucleophile is the Glu-432. An N-linked (GlcNAc...) asparagine glycan is attached at Asn-545.

Belongs to the glycosyl hydrolase 10 (cellulase F) family.

The enzyme catalyses Endohydrolysis of (1-&gt;4)-beta-D-xylosidic linkages in xylans.. It functions in the pathway glycan degradation; xylan degradation. Binds to and hydrolyzes insoluble and soluble xylan substrates. The chain is Endo-1,4-beta-xylanase 4 from Arabidopsis thaliana (Mouse-ear cress).